The sequence spans 23 residues: Caerin-4.2 (23 aa).

Expressed by the skin parotoid and/or rostral glands.

It is found in the secreted. Functionally, antibacterial peptide, that adopts an alpha helical conformation which can disrupt bacterial membranes. Each caerin displays a different antimicrobial specificity. This is Caerin-4.2 from Ranoidea caerulea (Green tree frog).